Consider the following 176-residue polypeptide: Large ribosomal subunit protein uL6 (176 aa).

This sequence belongs to the universal ribosomal protein uL6 family. As to quaternary structure, part of the 50S ribosomal subunit.

Functionally, this protein binds to the 23S rRNA, and is important in its secondary structure. It is located near the subunit interface in the base of the L7/L12 stalk, and near the tRNA binding site of the peptidyltransferase center. This chain is Large ribosomal subunit protein uL6, found in Burkholderia cenocepacia (strain HI2424).